The following is a 141-amino-acid chain: Large ribosomal subunit protein uL11 (141 aa).

This sequence belongs to the universal ribosomal protein uL11 family. In terms of assembly, part of the ribosomal stalk of the 50S ribosomal subunit. Interacts with L10 and the large rRNA to form the base of the stalk. L10 forms an elongated spine to which L12 dimers bind in a sequential fashion forming a multimeric L10(L12)X complex. In terms of processing, one or more lysine residues are methylated.

Its function is as follows. Forms part of the ribosomal stalk which helps the ribosome interact with GTP-bound translation factors. In Streptococcus suis (strain 98HAH33), this protein is Large ribosomal subunit protein uL11.